Consider the following 942-residue polypeptide: MLVTRGDRGGGERAPSRRPRCGLVPAGAAALLAGASCLCYGRSLRGEFVHDDVWAIVNNPDVRPGTPLRWAIFANDFWGKGLADSTSHKSYRPLCVLSFRLNIFLTGMNPFYFHAVNVILHCLVTLVLMYTCDKTVFKNRGLAFVTALLFAVHPVHTEAVAGIVGRADVLACLLFLLAFLSYQRSLDQGCAGQCFPTTASPFFLLLSLFLGTCAMLVKETGITVFGVCLVYDLFSPSHKQDKLSNGAVCQHSSGQPGSPQPSSQQAHPHRESRKQRFPHKDSWGGCHSPLPPEPKSSGFPMSPRAMWSLMRCLTGSTNRNFLLTLRPFLKRAILVISYVTVILYFRLWIMGGTMPLFSEQDNPASFSPYILTRFLTYSYLLAFNVWLLLAPITLCYDWQVGSIPLVETIWDVRNLATILLAVVMALLSLHCVAAFKRLEHKEVLAGLLFLVFPFIPASNLFFRVGFVVAERVLYMPSMGYCILFVHGLSKLCAGLSRCGATSLMASTVLLLLLFSWKTVKQNEIWLSRESLFRSGVQTLPHNAKVHYNYANFLKDQGRNKEAIYHYRTALKLYPRHASALNNLGTLTKDMAEAKMYYQKALQLHPQHNRALFNLGNLLKSQEKTEEAIMLLKESIKYGPDFADAYSSLASLLAEQERFKEAEDIYQAGIKNCPDSSDLHNNYAVFLVDSGFPEKAVAHYQQAIQLSPSHHVAVVNLGRLYRSLGENSKAEEWYRRALKVARTAEVLSPLGALYYNTGRHKEALEVYREAVSLQPSQRELRLALAQVLAVMGQTKEAEKITSHIVSEEPRCLECYRLLSAIHSKQEHHGKALEAIEKALQLKPKDPKVISELFFTKGNQLREQNLLDKAFESYEAAVTLDPDQAQAWMNMGGIRHIQGSYVSARAYYERALKLVPDSKLLKENLAKLDRLERRLQEVRERDQT.

Topologically, residues 1-20 (MLVTRGDRGGGERAPSRRPR) are cytoplasmic. The chain crosses the membrane as a helical span at residues 21–41 (CGLVPAGAAALLAGASCLCYG). Over 42 to 109 (RSLRGEFVHD…RLNIFLTGMN (68 aa)) the chain is Extracellular. The helical transmembrane segment at 110–130 (PFYFHAVNVILHCLVTLVLMY) threads the bilayer. The Cytoplasmic segment spans residues 131–140 (TCDKTVFKNR). A helical membrane pass occupies residues 141–157 (GLAFVTALLFAVHPVHT). Residues 158–159 (EA) lie on the Extracellular side of the membrane. A helical membrane pass occupies residues 160–180 (VAGIVGRADVLACLLFLLAFL). The Cytoplasmic segment spans residues 181–196 (SYQRSLDQGCAGQCFP). A helical membrane pass occupies residues 197 to 217 (TTASPFFLLLSLFLGTCAMLV). Residues 218 to 331 (KETGITVFGV…LLTLRPFLKR (114 aa)) are Extracellular-facing. The disordered stretch occupies residues 245 to 285 (NGAVCQHSSGQPGSPQPSSQQAHPHRESRKQRFPHKDSWGG). Residues 250 to 266 (QHSSGQPGSPQPSSQQA) are compositionally biased toward low complexity. Residues 332–352 (AILVISYVTVILYFRLWIMGG) traverse the membrane as a helical segment. Topologically, residues 353–373 (TMPLFSEQDNPASFSPYILTR) are cytoplasmic. Residues 374–394 (FLTYSYLLAFNVWLLLAPITL) form a helical membrane-spanning segment. Over 395 to 414 (CYDWQVGSIPLVETIWDVRN) the chain is Extracellular. A helical membrane pass occupies residues 415 to 435 (LATILLAVVMALLSLHCVAAF). Topologically, residues 436–441 (KRLEHK) are cytoplasmic. The chain crosses the membrane as a helical span at residues 442–462 (EVLAGLLFLVFPFIPASNLFF). A topological domain (extracellular) is located at residue arginine 463. A helical transmembrane segment spans residues 464 to 484 (VGFVVAERVLYMPSMGYCILF). The Cytoplasmic segment spans residues 485–498 (VHGLSKLCAGLSRC). The chain crosses the membrane as a helical span at residues 499 to 519 (GATSLMASTVLLLLLFSWKTV). Topologically, residues 520 to 942 (KQNEIWLSRE…LQEVRERDQT (423 aa)) are extracellular. TPR repeat units lie at residues 543–576 (AKVH…YPRH), 577–607 (ASAL…HPQH), 608–641 (NRAL…GPDF), 642–675 (ADAY…CPDS), 676–709 (SDLH…SPSH), 710–742 (HVAV…VART), 743–776 (AEVL…QPSQ), 777–810 (RELR…EPRC), 811–844 (LECY…KPKD), 849–882 (SELF…DPDQ), and 883–916 (AQAW…VPDS).

This sequence belongs to the TMTC family. As to quaternary structure, may interact with FAM168B.

The protein resides in the membrane. Its subcellular location is the endoplasmic reticulum. It carries out the reaction a di-trans,poly-cis-dolichyl beta-D-mannosyl phosphate + L-seryl-[protein] = 3-O-(alpha-D-mannosyl)-L-seryl-[protein] + a di-trans,poly-cis-dolichyl phosphate + H(+). The catalysed reaction is a di-trans,poly-cis-dolichyl beta-D-mannosyl phosphate + L-threonyl-[protein] = 3-O-(alpha-D-mannosyl)-L-threonyl-[protein] + a di-trans,poly-cis-dolichyl phosphate + H(+). It participates in protein modification; protein glycosylation. Functionally, transfers mannosyl residues to the hydroxyl group of serine or threonine residues. The 4 members of the TMTC family are O-mannosyl-transferases dedicated primarily to the cadherin superfamily, each member seems to have a distinct role in decorating the cadherin domains with O-linked mannose glycans at specific regions. Also acts as O-mannosyl-transferase on other proteins such as PDIA3. The protein is Protein O-mannosyl-transferase TMTC1 of Mus musculus (Mouse).